The sequence spans 329 residues: tRNA(Ile)-lysidine synthase (329 aa).

37 to 42 (SGGSDS) serves as a coordination point for ATP.

This sequence belongs to the tRNA(Ile)-lysidine synthase family.

It is found in the cytoplasm. The enzyme catalyses cytidine(34) in tRNA(Ile2) + L-lysine + ATP = lysidine(34) in tRNA(Ile2) + AMP + diphosphate + H(+). Its function is as follows. Ligates lysine onto the cytidine present at position 34 of the AUA codon-specific tRNA(Ile) that contains the anticodon CAU, in an ATP-dependent manner. Cytidine is converted to lysidine, thus changing the amino acid specificity of the tRNA from methionine to isoleucine. In Zymomonas mobilis subsp. mobilis (strain ATCC 31821 / ZM4 / CP4), this protein is tRNA(Ile)-lysidine synthase.